Here is a 374-residue protein sequence, read N- to C-terminus: PqqA peptide cyclase (374 aa).

Positions Val-7–Ala-222 constitute a Radical SAM core domain. Cys-21, Cys-25, and Cys-28 together coordinate [4Fe-4S] cluster.

It belongs to the radical SAM superfamily. PqqE family. As to quaternary structure, interacts with PqqD. The interaction is necessary for activity of PqqE. [4Fe-4S] cluster serves as cofactor.

The enzyme catalyses [PQQ precursor protein] + S-adenosyl-L-methionine = E-Y cross-linked-[PQQ precursor protein] + 5'-deoxyadenosine + L-methionine + H(+). It participates in cofactor biosynthesis; pyrroloquinoline quinone biosynthesis. In terms of biological role, catalyzes the cross-linking of a glutamate residue and a tyrosine residue in the PqqA protein as part of the biosynthesis of pyrroloquinoline quinone (PQQ). The sequence is that of PqqA peptide cyclase from Kluyvera intermedia (Enterobacter intermedius).